A 250-amino-acid polypeptide reads, in one-letter code: Low affinity immunoglobulin gamma Fc region receptor III-A (250 aa).

The signal sequence occupies residues 1–20; sequence MWRLLSPTALLLLVSAGTRA. At 21–207 the chain is on the extracellular side; the sequence is ADLSKAMVVL…TSTFLPHWYQ (187 aa). Ig-like C2-type domains are found at residues 32–105 and 120–189; these read PEWN…LEVH and EGDT…VNIT. Intrachain disulfides connect Cys47/Cys89 and Cys128/Cys172. Asn63, Asn133, Asn180, and Asn187 each carry an N-linked (GlcNAc...) asparagine glycan. The helical transmembrane segment at 208-228 threads the bilayer; that stretch reads IAFFLVTALLFVVDTGLHVAV. At 229–250 the chain is on the cytoplasmic side; sequence QRDLQSSVKEWKDGKVTWSHGP.

Forms a heterooligomeric complex with ITAM-containing signaling subunits FCER1G. Interacts (via transmembrane domain) with signaling subunits; this interaction is a prerequisite for receptor complex expression on the cell surface and intracellular signal transduction. Binds the Fc region of antigen-complexed IgG.

The protein localises to the cell membrane. Receptor for the invariable Fc fragment of immunoglobulin gamma (IgG). Optimally activated upon binding of clustered antigen-IgG complexes displayed on cell surfaces, triggers lysis of antibody-coated cells, a process known as antibody-dependent cellular cytotoxicity (ADCC). Does not bind free monomeric IgG, thus avoiding inappropriate effector cell activation in the absence of antigenic trigger. Mediates IgG effector functions on natural killer (NK) cells. Binds antigen-IgG complexes generated upon infection and triggers NK cell-dependent cytokine production and degranulation to limit viral load and propagation. Fc-binding subunit that associates with FCER1G adapter to form functional signaling complexes. Following the engagement of antigen-IgG complexes, triggers phosphorylation of immunoreceptor tyrosine-based activation motif (ITAM)-containing adapter with subsequent activation of phosphatidylinositol 3-kinase signaling and sustained elevation of intracellular calcium that ultimately drive NK cell activation. Mediates enhanced ADCC in response to afucosylated IgGs. In Felis catus (Cat), this protein is Low affinity immunoglobulin gamma Fc region receptor III-A.